A 392-amino-acid chain; its full sequence is Ribosomal RNA large subunit methyltransferase G (392 aa).

It belongs to the methyltransferase superfamily. RlmG family.

It is found in the cytoplasm. It catalyses the reaction guanosine(1835) in 23S rRNA + S-adenosyl-L-methionine = N(2)-methylguanosine(1835) in 23S rRNA + S-adenosyl-L-homocysteine + H(+). Functionally, specifically methylates the guanine in position 1835 (m2G1835) of 23S rRNA. This chain is Ribosomal RNA large subunit methyltransferase G, found in Colwellia psychrerythraea (strain 34H / ATCC BAA-681) (Vibrio psychroerythus).